We begin with the raw amino-acid sequence, 427 residues long: Peptidase B (427 aa).

The Mn(2+) site is built by lysine 195 and aspartate 200. The active site involves lysine 207. The Mn(2+) site is built by aspartate 218, aspartate 277, and glutamate 279. Arginine 281 is an active-site residue.

Belongs to the peptidase M17 family. As to quaternary structure, homohexamer. It depends on Mn(2+) as a cofactor.

The protein localises to the cytoplasm. The catalysed reaction is Release of an N-terminal amino acid, Xaa, from a peptide or arylamide. Xaa is preferably Glu or Asp but may be other amino acids, including Leu, Met, His, Cys and Gln.. Probably plays an important role in intracellular peptide degradation. The sequence is that of Peptidase B from Shigella dysenteriae serotype 1 (strain Sd197).